The following is a 447-amino-acid chain: Phosphoglucosamine mutase (447 aa).

Serine 102 (phosphoserine intermediate) is an active-site residue. Mg(2+)-binding residues include serine 102, aspartate 241, aspartate 243, and aspartate 245. Serine 102 carries the post-translational modification Phosphoserine.

It belongs to the phosphohexose mutase family. It depends on Mg(2+) as a cofactor. In terms of processing, activated by phosphorylation.

It carries out the reaction alpha-D-glucosamine 1-phosphate = D-glucosamine 6-phosphate. Its function is as follows. Catalyzes the conversion of glucosamine-6-phosphate to glucosamine-1-phosphate. The chain is Phosphoglucosamine mutase from Delftia acidovorans (strain DSM 14801 / SPH-1).